Here is a 92-residue protein sequence, read N- to C-terminus: Small ribosomal subunit protein uS19 (92 aa).

The protein belongs to the universal ribosomal protein uS19 family.

In terms of biological role, protein S19 forms a complex with S13 that binds strongly to the 16S ribosomal RNA. This is Small ribosomal subunit protein uS19 from Staphylococcus aureus (strain Mu3 / ATCC 700698).